Reading from the N-terminus, the 701-residue chain is Polyribonucleotide nucleotidyltransferase (701 aa).

Positions 487 and 493 each coordinate Mg(2+). The 60-residue stretch at proline 554–valine 613 folds into the KH domain. One can recognise an S1 motif domain in the interval glycine 623–lysine 691.

Belongs to the polyribonucleotide nucleotidyltransferase family. In terms of assembly, component of the RNA degradosome, which is a multiprotein complex involved in RNA processing and mRNA degradation. Requires Mg(2+) as cofactor.

It is found in the cytoplasm. The catalysed reaction is RNA(n+1) + phosphate = RNA(n) + a ribonucleoside 5'-diphosphate. Functionally, involved in mRNA degradation. Catalyzes the phosphorolysis of single-stranded polyribonucleotides processively in the 3'- to 5'-direction. The polypeptide is Polyribonucleotide nucleotidyltransferase (Pseudomonas paraeruginosa (strain DSM 24068 / PA7) (Pseudomonas aeruginosa (strain PA7))).